Reading from the N-terminus, the 259-residue chain is 5'-nucleotidase SurE (259 aa).

4 residues coordinate a divalent metal cation: Asp-8, Asp-9, Ser-39, and Asn-95.

The protein belongs to the SurE nucleotidase family. Requires a divalent metal cation as cofactor.

It is found in the cytoplasm. The enzyme catalyses a ribonucleoside 5'-phosphate + H2O = a ribonucleoside + phosphate. Nucleotidase that shows phosphatase activity on nucleoside 5'-monophosphates. The chain is 5'-nucleotidase SurE from Pseudothermotoga lettingae (strain ATCC BAA-301 / DSM 14385 / NBRC 107922 / TMO) (Thermotoga lettingae).